We begin with the raw amino-acid sequence, 38 residues long: Photosystem II reaction center protein L (38 aa).

A helical transmembrane segment spans residues 17-37 (SLYWGLLLIFVLAVSFSNYFF).

Belongs to the PsbL family. PSII is composed of 1 copy each of membrane proteins PsbA, PsbB, PsbC, PsbD, PsbE, PsbF, PsbH, PsbI, PsbJ, PsbK, PsbL, PsbM, PsbT, PsbX, PsbY, PsbZ, Psb30/Ycf12, at least 3 peripheral proteins of the oxygen-evolving complex and a large number of cofactors. It forms dimeric complexes.

It localises to the plastid membrane. One of the components of the core complex of photosystem II (PSII). PSII is a light-driven water:plastoquinone oxidoreductase that uses light energy to abstract electrons from H(2)O, generating O(2) and a proton gradient subsequently used for ATP formation. It consists of a core antenna complex that captures photons, and an electron transfer chain that converts photonic excitation into a charge separation. This subunit is found at the monomer-monomer interface and is required for correct PSII assembly and/or dimerization. This Aneura mirabilis (Parasitic liverwort) protein is Photosystem II reaction center protein L.